A 603-amino-acid polypeptide reads, in one-letter code: Prostaglandin G/H synthase 1 (603 aa).

The first 27 residues, 1-27 (MSRGSRLHRWPLLLLLLLLLPPPPVLP), serve as a signal peptide directing secretion. In terms of domain architecture, EGF-like spans 35–73 (PVNPCCYYPCQHQGICVRFGLDRYQCDCTRTGYSGPNCT). 4 disulfide bridges follow: Cys39-Cys50, Cys40-Cys162, Cys44-Cys60, and Cys62-Cys72. Residues Asn71, Asn107, and Asn147 are each glycosylated (N-linked (GlcNAc...) asparagine). His210 functions as the Proton acceptor in the catalytic mechanism. The active-site For cyclooxygenase activity is the Tyr388. Residue His391 coordinates heme b. Cys572 and Cys578 form a disulfide bridge.

This sequence belongs to the prostaglandin G/H synthase family. Homodimer. Heme b is required as a cofactor. Post-translationally, N-glycosylated. N-linked glycosylation is necessary for enzymatic activity. In terms of tissue distribution, brain cortex. Isoform 2 is expressed in the cerebral cortex and heart.

It localises to the microsome membrane. The protein localises to the endoplasmic reticulum membrane. It carries out the reaction (5Z,8Z,11Z,14Z)-eicosatetraenoate + AH2 + 2 O2 = prostaglandin H2 + A + H2O. It catalyses the reaction (5Z,8Z,11Z,14Z)-eicosatetraenoate + 2 O2 = prostaglandin G2. The catalysed reaction is prostaglandin G2 + AH2 = prostaglandin H2 + A + H2O. The enzyme catalyses (9Z,12Z)-octadecadienoate + AH2 + O2 = (9R)-hydroxy-(10E,12Z)-octadecadienoate + A + H2O. It carries out the reaction (9Z,12Z)-octadecadienoate + AH2 + O2 = (9S)-hydroxy-(10E,12Z)-octadecadienoate + A + H2O. It catalyses the reaction (9Z,12Z)-octadecadienoate + AH2 + O2 = (13S)-hydroxy-(9Z,11E)-octadecadienoate + A + H2O. The catalysed reaction is (9Z,12Z)-octadecadienoate + AH2 + O2 = (13R)-hydroxy-(9Z,11E)-octadecadienoate + A + H2O. It functions in the pathway lipid metabolism; prostaglandin biosynthesis. Its activity is regulated as follows. The cyclooxygenase activity is inhibited by nonsteroidal anti-inflammatory drugs (NSAIDs) including ibuprofen, flurbiprofen, ketoprofen, naproxen, flurbiprofen, anirolac, fenclofenac and diclofenac. Functionally, dual cyclooxygenase and peroxidase that plays an important role in the biosynthesis pathway of prostanoids, a class of C20 oxylipins mainly derived from arachidonate ((5Z,8Z,11Z,14Z)-eicosatetraenoate, AA, C20:4(n-6)), with a particular role in the inflammatory response. The cyclooxygenase activity oxygenates AA to the hydroperoxy endoperoxide prostaglandin G2 (PGG2), and the peroxidase activity reduces PGG2 to the hydroxy endoperoxide prostaglandin H2 (PGH2), the precursor of all 2-series prostaglandins and thromboxanes. This complex transformation is initiated by abstraction of hydrogen at carbon 13 (with S-stereochemistry), followed by insertion of molecular O2 to form the endoperoxide bridge between carbon 9 and 11 that defines prostaglandins. The insertion of a second molecule of O2 (bis-oxygenase activity) yields a hydroperoxy group in PGG2 that is then reduced to PGH2 by two electrons. Involved in the constitutive production of prostanoids in particular in the stomach and platelets. In gastric epithelial cells, it is a key step in the generation of prostaglandins, such as prostaglandin E2 (PGE2), which plays an important role in cytoprotection. In platelets, it is involved in the generation of thromboxane A2 (TXA2), which promotes platelet activation and aggregation, vasoconstriction and proliferation of vascular smooth muscle cells. Can also use linoleate (LA, (9Z,12Z)-octadecadienoate, C18:2(n-6)) as substrate and produce hydroxyoctadecadienoates (HODEs) in a regio- and stereospecific manner, being (9R)-HODE ((9R)-hydroxy-(10E,12Z)-octadecadienoate) and (13S)-HODE ((13S)-hydroxy-(9Z,11E)-octadecadienoate) its major products. This is Prostaglandin G/H synthase 1 (PTGS1) from Canis lupus familiaris (Dog).